Here is a 186-residue protein sequence, read N- to C-terminus: Protein Syd (186 aa).

It belongs to the Syd family.

It localises to the cell inner membrane. Interacts with the SecY protein in vivo. May bind preferentially to an uncomplexed state of SecY, thus functioning either as a chelating agent for excess SecY in the cell or as a regulatory factor that negatively controls the translocase function. The protein is Protein Syd of Pseudoalteromonas atlantica (strain T6c / ATCC BAA-1087).